Consider the following 389-residue polypeptide: Alanine racemase (389 aa).

K46 (proton acceptor; specific for D-alanine) is an active-site residue. Residue K46 is modified to N6-(pyridoxal phosphate)lysine. A substrate-binding site is contributed by R144. Residue Y275 is the Proton acceptor; specific for L-alanine of the active site. M323 is a substrate binding site.

This sequence belongs to the alanine racemase family. It depends on pyridoxal 5'-phosphate as a cofactor.

The catalysed reaction is L-alanine = D-alanine. The protein operates within amino-acid biosynthesis; D-alanine biosynthesis; D-alanine from L-alanine: step 1/1. In terms of biological role, catalyzes the interconversion of L-alanine and D-alanine. May also act on other amino acids. This Mycolicibacterium smegmatis (strain ATCC 700084 / mc(2)155) (Mycobacterium smegmatis) protein is Alanine racemase (alr).